The chain runs to 147 residues: Plasminogen receptor (KT) (147 aa).

The Extracellular portion of the chain corresponds to 1–52 (MGFIFSKSMNESMKNQKEFMLMNARLQLERQLIMQSEMRERQMAMQIAWSRE). The helical transmembrane segment at 53-73 (FLKYFGTFFGLAAISLTAGAI) threads the bilayer. The Cytoplasmic segment spans residues 74–78 (KKKKP). A helical transmembrane segment spans residues 79 to 99 (AFLVPIVPLSFILTYQYDLGY). Over 100–147 (GTLLERMKGEAEDILETEKSKLQLPRGMITFESIEKARKEQSRFFIDK) the chain is Extracellular.

Interacts with PLAT and PLAUR. As to expression, expressed in peripheral blood cells and monocytes. Expressed in adrenal medulla.

Its subcellular location is the cell membrane. Its function is as follows. Receptor for plasminogen. Regulates urokinase plasminogen activator-dependent and stimulates tissue-type plasminogen activator-dependent cell surface plasminogen activation. Proposed to be part of a local catecholaminergic cell plasminogen activation system that regulates neuroendocrine prohormone processing. Involved in regulation of inflammatory response; regulates monocyte chemotactic migration and matrix metalloproteinase activation, such as of MMP2 and MMP9. This chain is Plasminogen receptor (KT) (PLGRKT), found in Homo sapiens (Human).